The following is an 89-amino-acid chain: Small ribosomal subunit protein uS15 (89 aa).

This sequence belongs to the universal ribosomal protein uS15 family. As to quaternary structure, part of the 30S ribosomal subunit. Forms a bridge to the 50S subunit in the 70S ribosome, contacting the 23S rRNA.

In terms of biological role, one of the primary rRNA binding proteins, it binds directly to 16S rRNA where it helps nucleate assembly of the platform of the 30S subunit by binding and bridging several RNA helices of the 16S rRNA. Its function is as follows. Forms an intersubunit bridge (bridge B4) with the 23S rRNA of the 50S subunit in the ribosome. This is Small ribosomal subunit protein uS15 from Yersinia enterocolitica serotype O:8 / biotype 1B (strain NCTC 13174 / 8081).